Here is a 273-residue protein sequence, read N- to C-terminus: E3 ubiquitin-protein ligase SDIR1 (273 aa).

At 1 to 33 (MSFVFRGSRGDLESGFSGGFLPERRAMRVHGAR) the chain is on the cytoplasmic side. The helical transmembrane segment at 34 to 54 (PVNSNSLAFLVTVLLLFMILN) threads the bilayer. Residues 55-56 (SH) lie on the Lumenal side of the membrane. Residues 57-77 (QMPPNFLLWLVLGVFLMATTL) traverse the membrane as a helical segment. The Cytoplasmic portion of the chain corresponds to 78–273 (RMYATCQQLQ…EIDDDASDMV (196 aa)). The RING-type; atypical zinc-finger motif lies at 211-252 (CSVCLEQVTVGEIVRTLPCLHQFHAGCIDPWLRQQGTCPVCK).

Interacts with ATP1/SDIRIP1. Ubiquitous.

It is found in the endoplasmic reticulum membrane. It catalyses the reaction S-ubiquitinyl-[E2 ubiquitin-conjugating enzyme]-L-cysteine + [acceptor protein]-L-lysine = [E2 ubiquitin-conjugating enzyme]-L-cysteine + N(6)-ubiquitinyl-[acceptor protein]-L-lysine.. In terms of biological role, E3 ubiquitin-protein ligase that acts as a positive regulator of abscisic acid-related stress signal transduction. Interacts with and ubiquitinates ATP1/SDIRIP1 to modulate ATP1/SDIRIP1 stability through the 26S proteasome pathway. Regulates abscisic acid (ABA) and salt stress responses by negatively affecting ATP1/SDIRIP1 stability. The SDIR1-ATP1/SDIRIP1 complex plays an important role in ABA signaling through the ubiquitination pathway. The protein is E3 ubiquitin-protein ligase SDIR1 of Arabidopsis thaliana (Mouse-ear cress).